The chain runs to 276 residues: NH(3)-dependent NAD(+) synthetase (276 aa).

39 to 46 (GLSGGVDS) serves as a coordination point for ATP. Residue Asp-45 participates in Mg(2+) binding. Residue Arg-123 coordinates deamido-NAD(+). Thr-143 is an ATP binding site. Glu-148 serves as a coordination point for Mg(2+). The deamido-NAD(+) site is built by Lys-156 and Asp-163. ATP-binding residues include Lys-172 and Ser-194. Deamido-NAD(+) is bound at residue 254–255 (HK).

The protein belongs to the NAD synthetase family. In terms of assembly, homodimer.

The catalysed reaction is deamido-NAD(+) + NH4(+) + ATP = AMP + diphosphate + NAD(+) + H(+). Its pathway is cofactor biosynthesis; NAD(+) biosynthesis; NAD(+) from deamido-NAD(+) (ammonia route): step 1/1. In terms of biological role, catalyzes the ATP-dependent amidation of deamido-NAD to form NAD. Uses ammonia as a nitrogen source. The sequence is that of NH(3)-dependent NAD(+) synthetase from Hyperthermus butylicus (strain DSM 5456 / JCM 9403 / PLM1-5).